Reading from the N-terminus, the 298-residue chain is uncharacterized protein (298 aa).

The next 10 membrane-spanning stretches (helical) occupy residues 5–23 (ILVS…YFST), 33–52 (IFGY…VTLF), 72–91 (ALSY…LFLW), 101–120 (VSFG…RVFF), 127–145 (FKFI…NIVL), 149–166 (LSWE…YFSI), 175–194 (LASF…YFAL), 207–229 (FIWG…YVIA), 238–260 (LGLL…GEQI), and 265–284 (YPLF…DGVY). Positions 13-144 (FLFGYMYYFS…ATLGVISNIV (132 aa)) constitute an EamA domain.

This sequence belongs to the EamA transporter family.

The protein resides in the cell membrane. This is an uncharacterized protein from Haemophilus influenzae (strain ATCC 51907 / DSM 11121 / KW20 / Rd).